Consider the following 293-residue polypeptide: Putative serine protease 42 (293 aa).

The first 26 residues, 1–26 (MSSGGGSRGLLAWLLLLQPWPGQNWA), serve as a signal peptide directing secretion. A disordered region spans residues 33–60 (LPSPLLSEEGGENPEASPAPGPEAGPPL). Residues 80-293 (IVGGVDAEEG…IVSWGIGCGR (214 aa)) enclose the Peptidase S1 domain. An intrachain disulfide couples C105 to C121. Catalysis depends on H120, which acts as the Charge relay system. N141 is a glycosylation site (N-linked (GlcNAc...) asparagine). Residue D166 is the Charge relay system of the active site. N177 carries N-linked (GlcNAc...) asparagine glycosylation. 3 disulfide bridges follow: C200-C273, C232-C253, and C263-C291. The active-site Charge relay system is the S267. Residue N276 is glycosylated (N-linked (GlcNAc...) asparagine).

The protein belongs to the peptidase S1 family.

The protein localises to the cytoplasm. Its subcellular location is the cell membrane. Its function is as follows. Plays a role in spermatogenesis. Involved in germ cell survival during meiosis. In Homo sapiens (Human), this protein is Putative serine protease 42.